The primary structure comprises 415 residues: L-cysteine:1D-myo-inositol 2-amino-2-deoxy-alpha-D-glucopyranoside ligase (415 aa).

The interval 1-20 (MQSWSETAVPSVPGQGPPLR) is disordered. Cysteine 43 lines the Zn(2+) pocket. L-cysteinyl-5'-AMP-binding positions include 43-46 (CGIT), threonine 58, and 81-83 (NVT). The short motif at 45 to 55 (ITPYDATHLGH) is the 'HIGH' region element. The 'ERGGDP' region signature appears at 187–192 (ERGGDP). Tryptophan 227 contributes to the L-cysteinyl-5'-AMP binding site. Zn(2+) is bound at residue cysteine 231. 249 to 251 (GSD) serves as a coordination point for L-cysteinyl-5'-AMP. Histidine 256 is a Zn(2+) binding site. Isoleucine 283 contributes to the L-cysteinyl-5'-AMP binding site. Positions 289-293 (KMSKS) match the 'KMSKS' region motif.

This sequence belongs to the class-I aminoacyl-tRNA synthetase family. MshC subfamily. Monomer. Zn(2+) serves as cofactor.

The catalysed reaction is 1D-myo-inositol 2-amino-2-deoxy-alpha-D-glucopyranoside + L-cysteine + ATP = 1D-myo-inositol 2-(L-cysteinylamino)-2-deoxy-alpha-D-glucopyranoside + AMP + diphosphate + H(+). In terms of biological role, catalyzes the ATP-dependent condensation of GlcN-Ins and L-cysteine to form L-Cys-GlcN-Ins. The protein is L-cysteine:1D-myo-inositol 2-amino-2-deoxy-alpha-D-glucopyranoside ligase of Rhodococcus jostii (strain RHA1).